The sequence spans 246 residues: 3'(2'),5'-bisphosphate nucleotidase CysQ (246 aa).

Residues glutamate 64, aspartate 83, leucine 85, aspartate 86, and aspartate 205 each coordinate Mg(2+). Glutamate 64 serves as a coordination point for substrate. Substrate-binding positions include 85 to 88 and aspartate 205; that span reads LDGT.

It belongs to the inositol monophosphatase superfamily. CysQ family. Requires Mg(2+) as cofactor.

Its subcellular location is the cell inner membrane. The enzyme catalyses adenosine 3',5'-bisphosphate + H2O = AMP + phosphate. Functionally, converts adenosine-3',5'-bisphosphate (PAP) to AMP. In Shigella flexneri, this protein is 3'(2'),5'-bisphosphate nucleotidase CysQ.